Consider the following 268-residue polypeptide: Mediator of RNA polymerase II transcription subunit 8 (268 aa).

A coiled-coil region spans residues methionine 1–phenylalanine 29. At serine 82 the chain carries Phosphoserine. Positions alanine 133–serine 163 form a coiled coil. Positions serine 142–leucine 151 are interaction with the Elongin BC complex. Disordered regions lie at residues lysine 156 to glycine 176 and asparagine 193 to arginine 268. Residues serine 200 to glycine 209 show a composition bias toward gly residues.

It belongs to the Mediator complex subunit 8 family. As to quaternary structure, component of the Mediator complex, which is composed of MED1, MED4, MED6, MED7, MED8, MED9, MED10, MED11, MED12, MED13, MED13L, MED14, MED15, MED16, MED17, MED18, MED19, MED20, MED21, MED22, MED23, MED24, MED25, MED26, MED27, MED29, MED30, MED31, CCNC, CDK8 and CDC2L6/CDK11. The MED12, MED13, CCNC and CDK8 subunits form a distinct module termed the CDK8 module. Mediator containing the CDK8 module is less active than Mediator lacking this module in supporting transcriptional activation. Individual preparations of the Mediator complex lacking one or more distinct subunits have been variously termed ARC, CRSP, DRIP, PC2, SMCC and TRAP. May be part of a multisubunit E3 ubiquitin-protein ligase complex with the Elongin BC complex (ELOB and ELOC), CUL2 and RBX1.

It localises to the nucleus. Its pathway is protein modification; protein ubiquitination. Its function is as follows. Component of the Mediator complex, a coactivator involved in the regulated transcription of nearly all RNA polymerase II-dependent genes. Mediator functions as a bridge to convey information from gene-specific regulatory proteins to the basal RNA polymerase II transcription machinery. Mediator is recruited to promoters by direct interactions with regulatory proteins and serves as a scaffold for the assembly of a functional preinitiation complex with RNA polymerase II and the general transcription factors. May play a role as a target recruitment subunit in E3 ubiquitin-protein ligase complexes and thus in ubiquitination and subsequent proteasomal degradation of target proteins. The protein is Mediator of RNA polymerase II transcription subunit 8 (Med8) of Mus musculus (Mouse).